A 395-amino-acid polypeptide reads, in one-letter code: Phosphopentomutase (395 aa).

Mn(2+) contacts are provided by Asp14, Asp286, His291, Asp327, His328, and His339.

Belongs to the phosphopentomutase family. Mn(2+) serves as cofactor.

Its subcellular location is the cytoplasm. The catalysed reaction is 2-deoxy-alpha-D-ribose 1-phosphate = 2-deoxy-D-ribose 5-phosphate. The enzyme catalyses alpha-D-ribose 1-phosphate = D-ribose 5-phosphate. Its pathway is carbohydrate degradation; 2-deoxy-D-ribose 1-phosphate degradation; D-glyceraldehyde 3-phosphate and acetaldehyde from 2-deoxy-alpha-D-ribose 1-phosphate: step 1/2. Its function is as follows. Isomerase that catalyzes the conversion of deoxy-ribose 1-phosphate (dRib-1-P) and ribose 1-phosphate (Rib-1-P) to deoxy-ribose 5-phosphate (dRib-5-P) and ribose 5-phosphate (Rib-5-P), respectively. The polypeptide is Phosphopentomutase (Staphylococcus saprophyticus subsp. saprophyticus (strain ATCC 15305 / DSM 20229 / NCIMB 8711 / NCTC 7292 / S-41)).